A 325-amino-acid polypeptide reads, in one-letter code: Pyruvate dehydrogenase E1 component subunit beta (325 aa).

Position 60 (glutamate 60) interacts with thiamine diphosphate.

Heterodimer of an alpha and a beta chain. Requires thiamine diphosphate as cofactor.

It catalyses the reaction N(6)-[(R)-lipoyl]-L-lysyl-[protein] + pyruvate + H(+) = N(6)-[(R)-S(8)-acetyldihydrolipoyl]-L-lysyl-[protein] + CO2. The pyruvate dehydrogenase complex catalyzes the overall conversion of pyruvate to acetyl-CoA and CO(2). It contains multiple copies of three enzymatic components: pyruvate dehydrogenase (E1), dihydrolipoamide acetyltransferase (E2) and lipoamide dehydrogenase (E3). This chain is Pyruvate dehydrogenase E1 component subunit beta (pdhB), found in Staphylococcus aureus (strain Mu50 / ATCC 700699).